Consider the following 44-residue polypeptide: Benzaldehyde dehydrogenase [NAD(+)] II (44 aa).

Belongs to the aldehyde dehydrogenase family.

It catalyses the reaction benzaldehyde + NAD(+) + H2O = benzoate + NADH + 2 H(+). The chain is Benzaldehyde dehydrogenase [NAD(+)] II from Acinetobacter guillouiae (Acinetobacter genomosp. 11).